Here is a 632-residue protein sequence, read N- to C-terminus: Extracellular metalloproteinase 1 (632 aa).

The N-terminal stretch at 1-19 (MHGLLLAAGLISLPLHVLA) is a signal peptide. A propeptide spanning residues 20-246 (HPQPSSTSLA…VVDYVAHATF (227 aa)) is cleaved from the precursor. The N-linked (GlcNAc...) asparagine glycan is linked to N284. Zn(2+) is bound at residue T430. H431 is a catalytic residue. S434 is a binding site for Zn(2+). N591 carries an N-linked (GlcNAc...) asparagine glycan.

Belongs to the peptidase M36 family. Zn(2+) is required as a cofactor.

It is found in the secreted. PMSF, soybean trypsin inhibitor (SBTI) and chymostatin strongly inhibit the proteinase. Its function is as follows. Secreted metalloproteinase probably acting as a virulence factor. The polypeptide is Extracellular metalloproteinase 1 (MEP1) (Arthroderma otae (Microsporum canis)).